The following is a 252-amino-acid chain: Thiamine thiazole synthase (252 aa).

Residues serine 35, 54 to 55 (EK), glycine 62, valine 126, and 152 to 154 (HVD) each bind NAD(+). The Fe cation site is built by aspartate 154 and histidine 169. Methionine 217 is an NAD(+) binding site. Arginine 227 lines the glycine pocket.

The protein belongs to the THI4 family. In terms of assembly, homooctamer; tetramer of dimers. It depends on Fe(2+) as a cofactor.

The enzyme catalyses hydrogen sulfide + glycine + NAD(+) = ADP-5-ethyl-4-methylthiazole-2-carboxylate + nicotinamide + 3 H2O + H(+). It participates in cofactor biosynthesis; thiamine diphosphate biosynthesis. In terms of biological role, involved in the biosynthesis of the thiazole moiety of thiamine. Catalyzes the conversion of NAD and glycine to adenosine diphosphate 5-(2-hydroxyethyl)-4-methylthiazole-2-carboxylate (ADT), an adenylated thiazole intermediate, using free sulfide as a source of sulfur. This Pyrococcus abyssi (strain GE5 / Orsay) protein is Thiamine thiazole synthase.